A 545-amino-acid chain; its full sequence is Glucose-6-phosphate isomerase 1 (545 aa).

Glutamate 356 (proton donor) is an active-site residue. Catalysis depends on residues histidine 387 and lysine 508.

This sequence belongs to the GPI family.

Its subcellular location is the cytoplasm. It catalyses the reaction alpha-D-glucose 6-phosphate = beta-D-fructose 6-phosphate. The protein operates within carbohydrate biosynthesis; gluconeogenesis. Its pathway is carbohydrate degradation; glycolysis; D-glyceraldehyde 3-phosphate and glycerone phosphate from D-glucose: step 2/4. In terms of biological role, catalyzes the reversible isomerization of glucose-6-phosphate to fructose-6-phosphate. The chain is Glucose-6-phosphate isomerase 1 from Cupriavidus pinatubonensis (strain JMP 134 / LMG 1197) (Cupriavidus necator (strain JMP 134)).